Consider the following 342-residue polypeptide: MKLAVIPGDGIGTEVTAEALKVMRAALAGSGESIETTDYDLGARRYLRNGELLTDDDLASLREHDAILLGAVGDPRTVPSGVLERGLLLKMRFVLDHHVNLRPSVLYPGVTSPLSDPGKVDFIVVREGTEGLYAGNGGSIRVDTPHEVANETSVNTRYGVERVVRYAFDRAQERRKKLTLVHKTNVLVYAGGLWQRTVDQVAQEYLDVTVDYCHIDAATIYMVTDPSRFDVIVTDNLFGDIITDLAGAVTGGIGLAASGNIDATGTNPSMFEPVHGSAPDIAGKGIADPTAAILSGALLFRHLGKTDEADAIEAAVRNDVASRDGSIRTEEVGTRIANSLDS.

Substrate-binding residues include R92, R102, R126, and D216. The Mg(2+) site is built by D216, D240, and D244. Residue 276–288 (GSAPDIAGKGIAD) coordinates NAD(+).

The protein belongs to the isocitrate and isopropylmalate dehydrogenases family. LeuB type 2 subfamily. Homodimer. Mg(2+) is required as a cofactor. It depends on Mn(2+) as a cofactor.

The protein localises to the cytoplasm. The enzyme catalyses (2R,3S)-3-isopropylmalate + NAD(+) = 4-methyl-2-oxopentanoate + CO2 + NADH. The protein operates within amino-acid biosynthesis; L-leucine biosynthesis; L-leucine from 3-methyl-2-oxobutanoate: step 3/4. Functionally, catalyzes the oxidation of 3-carboxy-2-hydroxy-4-methylpentanoate (3-isopropylmalate) to 3-carboxy-4-methyl-2-oxopentanoate. The product decarboxylates to 4-methyl-2 oxopentanoate. This is 3-isopropylmalate dehydrogenase from Corynebacterium kroppenstedtii (strain DSM 44385 / JCM 11950 / CIP 105744 / CCUG 35717).